The following is a 501-amino-acid chain: Lysine--tRNA ligase (501 aa).

Residues E411 and E418 each contribute to the Mg(2+) site.

The protein belongs to the class-II aminoacyl-tRNA synthetase family. Homodimer. Mg(2+) is required as a cofactor.

Its subcellular location is the cytoplasm. The catalysed reaction is tRNA(Lys) + L-lysine + ATP = L-lysyl-tRNA(Lys) + AMP + diphosphate. The polypeptide is Lysine--tRNA ligase (Pseudomonas aeruginosa (strain ATCC 15692 / DSM 22644 / CIP 104116 / JCM 14847 / LMG 12228 / 1C / PRS 101 / PAO1)).